The following is a 503-amino-acid chain: Glucose-6-phosphate 1-dehydrogenase (503 aa).

NADP(+)-binding positions include 14-21 (GASGDLSK), R49, and K158. D-glucose 6-phosphate is bound by residues K158, 188–192 (HYLGK), E226, and D245. H250 functions as the Proton acceptor in the catalytic mechanism. K341 provides a ligand contact to NADP(+). K344 is a binding site for D-glucose 6-phosphate. K350, R354, and R376 together coordinate NADP(+). A D-glucose 6-phosphate-binding site is contributed by Q378. NADP(+)-binding positions include 384-386 (YLK), R471, and Y487.

It belongs to the glucose-6-phosphate dehydrogenase family.

It carries out the reaction D-glucose 6-phosphate + NADP(+) = 6-phospho-D-glucono-1,5-lactone + NADPH + H(+). The protein operates within carbohydrate degradation; pentose phosphate pathway; D-ribulose 5-phosphate from D-glucose 6-phosphate (oxidative stage): step 1/3. Functionally, catalyzes the rate-limiting step of the oxidative pentose-phosphate pathway, which represents a route for the dissimilation of carbohydrates besides glycolysis. The main function of this enzyme is to provide reducing power (NADPH) and pentose phosphates for fatty acid and nucleic acid synthesis. The G6PDH activity is required to cope with hydrogen peroxide and potassium bisulfite stresses and plays a role in adaptation to conditions used in wine fermentations. The polypeptide is Glucose-6-phosphate 1-dehydrogenase (Hanseniaspora uvarum (Yeast)).